A 276-amino-acid chain; its full sequence is Formamidopyrimidine-DNA glycosylase (276 aa).

The active-site Schiff-base intermediate with DNA is proline 2. Glutamate 3 functions as the Proton donor in the catalytic mechanism. The active-site Proton donor; for beta-elimination activity is lysine 59. Positions 93, 112, and 155 each coordinate DNA. The segment at 240–274 adopts an FPG-type zinc-finger fold; that stretch reads QVYNREGKPCPRCGDKIAKKKVGGRSSYYCPTCQK. The Proton donor; for delta-elimination activity role is filled by arginine 264.

This sequence belongs to the FPG family. In terms of assembly, monomer. Zn(2+) is required as a cofactor.

It carries out the reaction Hydrolysis of DNA containing ring-opened 7-methylguanine residues, releasing 2,6-diamino-4-hydroxy-5-(N-methyl)formamidopyrimidine.. The enzyme catalyses 2'-deoxyribonucleotide-(2'-deoxyribose 5'-phosphate)-2'-deoxyribonucleotide-DNA = a 3'-end 2'-deoxyribonucleotide-(2,3-dehydro-2,3-deoxyribose 5'-phosphate)-DNA + a 5'-end 5'-phospho-2'-deoxyribonucleoside-DNA + H(+). Its function is as follows. Involved in base excision repair of DNA damaged by oxidation or by mutagenic agents. Acts as a DNA glycosylase that recognizes and removes damaged bases. Has a preference for oxidized purines, such as 7,8-dihydro-8-oxoguanine (8-oxoG). Has AP (apurinic/apyrimidinic) lyase activity and introduces nicks in the DNA strand. Cleaves the DNA backbone by beta-delta elimination to generate a single-strand break at the site of the removed base with both 3'- and 5'-phosphates. This chain is Formamidopyrimidine-DNA glycosylase, found in Pelotomaculum thermopropionicum (strain DSM 13744 / JCM 10971 / SI).